We begin with the raw amino-acid sequence, 60 residues long: Cytotoxin 3 (60 aa).

4 cysteine pairs are disulfide-bonded: cysteine 3–cysteine 21, cysteine 14–cysteine 38, cysteine 42–cysteine 53, and cysteine 54–cysteine 59.

The protein belongs to the three-finger toxin family. Short-chain subfamily. Type IA cytotoxin sub-subfamily. Monomer in solution; Homodimer and oligomer in the presence of negatively charged lipids forming a pore with a size ranging between 20 and 30 Angstroms. Expressed by the venom gland.

The protein localises to the secreted. Its subcellular location is the target cell membrane. Its function is as follows. Shows cytolytic activity on many different cells by forming pore in lipid membranes. In vivo, increases heart rate or kills the animal by cardiac arrest. In addition, it binds to heparin with high affinity, interacts with Kv channel-interacting protein 1 (KCNIP1) in a calcium-independent manner, and binds to integrin alpha-V/beta-3 (ITGAV/ITGB3) with moderate affinity. This chain is Cytotoxin 3, found in Naja naja (Indian cobra).